The primary structure comprises 654 residues: Dystrobrevin beta (654 aa).

M1 carries the post-translational modification N-acetylmethionine. A phosphothreonine mark is found at T11, T69, T179, and T212. The ZZ-type zinc-finger motif lies at 238–294 (FHPVECSYCHCESMMGFRYRCQQCHNYQLCQNCFWRGHAGGPHSNQHQMKELSSWKS). Zn(2+) contacts are provided by C243, C246, C258, C261, C267, C270, H280, and H284. Residue S394 is modified to Phosphoserine. Positions 399–448 (DEEHRLIARYAARLAAEAGNMTRPPTDASFNFDANKQQRQLIAELENKNR) are syntrophin-binding region. T424 carries the post-translational modification Phosphothreonine. A coiled-coil region spans residues 429 to 519 (NFDANKQQRQ…LEGLMKLLKA (91 aa)). A disordered region spans residues 520-562 (QATGSPHTSPTHGGGRSMPMPVRSTSAGSTPTHGPQDSLSGVG). Composition is skewed to polar residues over residues 521–530 (ATGSPHTSPT) and 542–558 (RSTSAGSTPTHGPQDSL).

Belongs to the dystrophin family. Dystrobrevin subfamily. Interacts with dystrophin short form DP71 and syntrophins SNTG1 and SNTG2. Binds DTNBP1. Forms a specific complex composed of DMD, SNTB2 and SNTA1 in neuron; the interaction with SNTB2 and SNTA1 is DMD independent. Interacts with UTRN and dystrophin short form DP71 in the kidney and liver. Interacts with SNTB1, SNTB2 and SNTA1 in kidney and liver. Interacts with KIF5A. Interacts with HMG20A and HMG20B. Interacts with OLFM1. Interacts with PRKAR2B and PRKAR1A. In terms of processing, phosphorylated by PKA. Phosphorylation at Thr-11 alters the interaction with KIF5A. In terms of tissue distribution, expressed in neurons. In the isocortex, expressed most prominently in the somata (including the nuclei) and the dendrites of the pyramidal cells. Expressed in the hippocampus CA1, CA2, and CA3 neurons, namely in the initial segments of dendrites. Expressed in the Purkinje cells, molecular layer interneurons, and granule cells of cerebellum. Expressed in axon fascicles associated with the spinal trigeminal tract and in the internal capsule in the brainstem.

Its subcellular location is the cytoplasm. The protein resides in the postsynaptic density. The protein localises to the cell projection. It is found in the dendrite. It localises to the basal cell membrane. Its subcellular location is the postsynapse. The protein resides in the nucleus. Scaffolding protein that assembles DMD and SNTA1 molecules to the basal membrane of kidney cells and liver sinusoids. May function as a repressor of the SYN1 promoter through the binding of repressor element-1 (RE-1), in turn regulates SYN1 expression and may be involved in cell proliferation regulation during the early phase of neural differentiation. May be required for proper maturation and function of a subset of inhibitory synapses. In Rattus norvegicus (Rat), this protein is Dystrobrevin beta.